Here is a 105-residue protein sequence, read N- to C-terminus: Thioredoxin (105 aa).

In terms of domain architecture, Thioredoxin spans 2 to 105 (VKQIESKYAF…KLEATINELI (104 aa)). Lysine 3 carries the post-translational modification N6-acetyllysine. An N6-succinyllysine modification is found at lysine 8. Residues cysteine 32 and cysteine 35 each act as nucleophile in the active site. A disulfide bridge connects residues cysteine 32 and cysteine 35. An N6-acetyllysine modification is found at lysine 39. An S-nitrosocysteine mark is found at cysteine 62 and cysteine 69. Residue cysteine 73 is modified to S-nitrosocysteine; alternate. N6-acetyllysine; alternate is present on lysine 94. Lysine 94 bears the N6-succinyllysine; alternate mark.

Belongs to the thioredoxin family. In terms of assembly, homodimer; disulfide-linked. Interacts with TXNIP through the redox-active site. Interacts with MAP3K5 and CASP3. Interacts with APEX1; the interaction stimulates the FOS/JUN AP-1 DNA-binding activity in a redox-dependent manner. Post-translationally, in the fully reduced protein, both Cys-69 and Cys-73 are nitrosylated in response to nitric oxide (NO). When two disulfide bonds are present in the protein, only Cys-73 is nitrosylated. Cys-73 can serve as donor for nitrosylation of target proteins. In terms of tissue distribution, erythrocytes.

The protein localises to the nucleus. Its subcellular location is the cytoplasm. It is found in the secreted. Participates in various redox reactions through the reversible oxidation of its active center dithiol to a disulfide and catalyzes dithiol-disulfide exchange reactions. Plays a role in the reversible S-nitrosylation of cysteine residues in target proteins, and thereby contributes to the response to intracellular nitric oxide. Nitrosylates the active site Cys of CASP3 in response to nitric oxide (NO), and thereby inhibits caspase-3 activity. Induces the FOS/JUN AP-1 DNA binding activity in ionizing radiation (IR) cells through its oxidation/reduction status and stimulates AP-1 transcriptional activity. This chain is Thioredoxin (TXN), found in Sus scrofa (Pig).